Here is a 37-residue protein sequence, read N- to C-terminus: MKVQASVRKICENCRLIRRRRRVMVVCKNPKHKQRQG.

The protein belongs to the bacterial ribosomal protein bL36 family.

The protein localises to the plastid. It is found in the chloroplast. In Chaetosphaeridium globosum (Charophycean green alga), this protein is Large ribosomal subunit protein bL36c.